The primary structure comprises 644 residues: Chaperone protein DnaK (644 aa).

Phosphothreonine; by autocatalysis is present on Thr199. The segment at 602–644 (LYAEQSAQQQGSAGATGGEQPKADKAADDGVVDAEFEEVKDDK) is disordered. Residues 604 to 614 (AEQSAQQQGSA) are compositionally biased toward low complexity. Residues 631–644 (GVVDAEFEEVKDDK) are compositionally biased toward acidic residues.

Belongs to the heat shock protein 70 family.

Functionally, acts as a chaperone. This is Chaperone protein DnaK from Teredinibacter turnerae (strain ATCC 39867 / T7901).